Reading from the N-terminus, the 332-residue chain is Opticin (332 aa).

A signal peptide spans 1–19 (MRLLAFLSLLALVLQETGT). Residues 21–41 (SLPRKERKRREEQMPREGDSF) are disordered. Residues 29–39 (RREEQMPREGD) are compositionally biased toward basic and acidic residues. Tyrosine 65 and tyrosine 71 each carry sulfotyrosine. The segment at 86-106 (ATSISPAKSTTAPGTPSSNPT) is disordered. An LRRNT domain is found at 116-153 (LLSSQPNHGLPTCLVCVCLGSSVYCDDIDLEDIPPLPR). A Sulfotyrosine modification is found at tyrosine 139. LRR repeat units follow at residues 154–175 (RTAY…DFKG), 178–199 (KLKR…AFRL), 202–223 (ALQD…PSGI), 248–269 (KLQF…LPLS), 270–290 (LRSV…VFCD), and 300–320 (QLED…PSAY). Cysteines 289 and 322 form a disulfide. Asparagine 312 carries N-linked (GlcNAc...) asparagine glycosylation.

It belongs to the small leucine-rich proteoglycan (SLRP) family. SLRP class III subfamily. As to quaternary structure, homodimer. O-glycosylated. In terms of processing, proteolytically cleaved by MMP1, MMP2, MMP3, MMP7, MMP8, MMP9, ADAMTS4, and ADAMTS5. Proteolytically cleaved by MMP13. The degradation of OPTC by proteases may contribute to osteoarthritis pathophysiology. Post-translationally, sulfated on tyrosine residues. As to expression, expressed in cartilage and synovial membranes (at protein level). Expressed in the retina, iris, ligament, skin and fetal liver (at protein level). Expressed in the retinal pigment epithelium (at protein level). Expressed in synovial fibroblasts and subchondral bone osteoblasts.

The protein localises to the secreted. Its subcellular location is the extracellular space. It localises to the extracellular matrix. In terms of biological role, inhibits angiogenesis in the vitreous humor of the eye, and therefore represses neovascularization. Binds collagen fibrils. May be involved in collagen fiber organization via regulation of other members of the small leucine-rich repeat proteoglycan superfamily. This chain is Opticin (OPTC), found in Homo sapiens (Human).